Consider the following 278-residue polypeptide: Antiviral protein MAP (278 aa).

Residues 1-28 (MLTTTKVFFLLLTTWITWYAIVNPQSRA) form the signal peptide. A disulfide bridge connects residues C64 and C248. E196 is an active-site residue.

It catalyses the reaction Endohydrolysis of the N-glycosidic bond at one specific adenosine on the 28S rRNA.. Functionally, inhibits viral infection of plants, and protein synthesis in vitro. This Mirabilis jalapa (Garden four-o'clock) protein is Antiviral protein MAP.